The primary structure comprises 570 residues: Phosphoglucomutase 1 (570 aa).

Ser2 is modified (N-acetylserine). Residues Arg24 and Ser120 each coordinate alpha-D-glucose 1,6-bisphosphate. Ser120 serves as the catalytic Phosphoserine intermediate. Mg(2+)-binding residues include Ser120, Asp291, Asp293, and Asp295. Ser120 carries the post-translational modification Phosphoserine. Positions 295, 296, 360, 379, 381, and 392 each coordinate alpha-D-glucose 1,6-bisphosphate.

This sequence belongs to the phosphohexose mutase family. In terms of assembly, monomer. Requires Mg(2+) as cofactor.

Its subcellular location is the cytoplasm. The enzyme catalyses alpha-D-glucose 1-phosphate = alpha-D-glucose 6-phosphate. It carries out the reaction O-phospho-L-seryl-[protein] + alpha-D-glucose 1-phosphate = alpha-D-glucose 1,6-bisphosphate + L-seryl-[protein]. The catalysed reaction is alpha-D-glucose 1,6-bisphosphate + L-seryl-[protein] = O-phospho-L-seryl-[protein] + alpha-D-glucose 6-phosphate. Minor phosphoglucomutase isozyme that catalyzes the reversible interconversion of alpha-D-glucose 1-phosphate and alpha-D-glucose 6-phosphate. The mechanism proceeds via the intermediate compound alpha-D-glucose 1,6-bisphosphate. Constitutes about 10-20% of the phosphoglucomutase activity in the cell. Key enzyme in hexose metabolism. The forward reaction is an essential step in the energy metabolism of galactose since the product of the galactose pathway enzymes in yeast is glucose 1-phosphate. The reverse reaction is an essential step for biosynthesis when carbon sources other than galactose are the energy source because glucose 1-phosphate is the starting point for the synthesis of UDP-glucose, which acts as a precursor for the synthesis of oligosaccharides and trehalose. The protein is Phosphoglucomutase 1 of Saccharomyces cerevisiae (strain ATCC 204508 / S288c) (Baker's yeast).